A 223-amino-acid polypeptide reads, in one-letter code: Thymidylate kinase (223 aa).

Residue 7–14 coordinates ATP; that stretch reads GIDGAGKS.

The protein belongs to the thymidylate kinase family.

It carries out the reaction dTMP + ATP = dTDP + ADP. Its function is as follows. Phosphorylation of dTMP to form dTDP in both de novo and salvage pathways of dTTP synthesis. This chain is Thymidylate kinase, found in Prosthecochloris aestuarii (strain DSM 271 / SK 413).